Here is a 1334-residue protein sequence, read N- to C-terminus: MASPPHQQLLHHHSTEVSCDSSGDSNSVTVRINPRQQQALSAKRCKYSISSSCSSGESGGVGRGGGGGLRRQKKLPQLFERASSRWWDPKFDSTNLEEASMERCFPQTQRRFRYALFYIGSACLLWGIYFGVHMREKQMVFMVPALCFLLVCVAFFAFTFTKAYARRYVWTSGYTLLVFALTLAPQFQPWTLGERQRVQPRPAAPVDTCLSQVGSFSMCVEVLLLLYTVMHLPLYLSLFLGLSYSVLFETSAFRDESCTLLGGGAVYWELLSKAFLHVCIHAIGIHLFIMSEVRSRSTFLKVGQSIMHGKDLEVEKALKERMIHSVMPRIIADDLMKQGDDESENSVKRHSTSSPKNRKKKPSIQKTPIIFRPFKMQQIEQVSILFADIVGFTKMSANKSAHALVGLLNDLFGRFDRLCEDTKCEKISTLGDCYYCVAGCPEPRADHAYCCIEMGLGMIKAIEQFCQEKKEMVNMRVGVHTGTVLCGILGMRRFKFDVWSNDVNLANLMEQLGVAGKVHISEATAKYLDDRYEMEDGKVTERVGQSAVADQLKGLKTYLISGQKVKEPHCSCSQALLQLGGWGWSQMQAAPSAENTADSTKALKHVEKPKPCPSCSTTLVPPCDVSIDEGAIQNGCQDEHKNSTKAPGGHSPKTQNGLLSPPQEEKLSNSQTSLYEMLQEKGRWGGVSLDQSALLPLRFKNIREKTDAHFVDVIKEDSLMKDYFFKPPISKLSLNFLDQDLEMAYRTSYQEEVMRNAPVKTFASATFSSLLDVFLSTTVFLILSVTCFLKHGMVASPPPPAAVVVFVIAILLEVLSLVISVRMVFFLEEVMACTKRLLELISGWLPRHFLGAILVSLPALAVFSHFTSDFETNIHYTMFMCCAILIAIVQYCNFCQLSSWMRSLLATVVGAVLLILLYVSLCPDSSVETLHLDLAQNLSSRKSPCNSSMPADVKRPADLIGQEVILAVFLLLLLVWFLNRSFEVSYRLHYHGDVEADLHRTKIQSMRDQPDSCVRNIIPYHVADELKVSQSYSKNHDSGGVIFASIVNFSEFYEENYEGGKECYRVLNELIGDFDELLSKPHYSSIEKIKTIGATYMAASGLNTSQCQDSNHPHGHLQTLFEFAKEMMRVVDDFNNNMLWFNFKLRIGFNHGPLTAGVIGTTKLLYDIWGDTVNIASRMDTIGVECRIQVSEETYRILSKMGYDFDYRGTVNVKGKGQMKTYLYPKCMDNGIVPHHQLSISPDIRVQVDGSIGRSPTDEIANLVPSVQNSDKTAHATDNSETKDALPSSKKLQKEPTKAEERCRFGKAVEKTDCEEAGTEEVNELTKLNVSKSV.

Disordered regions lie at residues 1–28 and 49–71; these read MASP…SNSV and ISSS…GLRR. Topologically, residues 1-113 are cytoplasmic; sequence MASPPHQQLL…CFPQTQRRFR (113 aa). Polar residues predominate over residues 16–28; sequence EVSCDSSGDSNSV. Residues 57 to 69 are compositionally biased toward gly residues; it reads ESGGVGRGGGGGL. The chain crosses the membrane as a helical span at residues 114 to 134; the sequence is YALFYIGSACLLWGIYFGVHM. Residues 135–137 are Extracellular-facing; sequence REK. A helical membrane pass occupies residues 138–158; that stretch reads QMVFMVPALCFLLVCVAFFAF. At 159–167 the chain is on the cytoplasmic side; sequence TFTKAYARR. Residues 168 to 187 traverse the membrane as a helical segment; it reads YVWTSGYTLLVFALTLAPQF. Residues 188 to 207 are Extracellular-facing; the sequence is QPWTLGERQRVQPRPAAPVD. Residues 208-227 form a helical membrane-spanning segment; that stretch reads TCLSQVGSFSMCVEVLLLLY. Topologically, residues 228–233 are cytoplasmic; sequence TVMHLP. The chain crosses the membrane as a helical span at residues 234-250; sequence LYLSLFLGLSYSVLFET. Residues 251–269 lie on the Extracellular side of the membrane; sequence SAFRDESCTLLGGGAVYWE. The helical transmembrane segment at 270-290 threads the bilayer; that stretch reads LLSKAFLHVCIHAIGIHLFIM. Over 291 to 768 the chain is Cytoplasmic; that stretch reads SEVRSRSTFL…VKTFASATFS (478 aa). The segment at 338–363 is disordered; that stretch reads QGDDESENSVKRHSTSSPKNRKKKPS. Residues 348–363 are compositionally biased toward basic residues; sequence KRHSTSSPKNRKKKPS. Mg(2+) contacts are provided by D388, I389, and D432. Residues 388–393, 430–432, and R476 each bind ATP; these read DIVGFT and LGD. The segment at 635–670 is disordered; the sequence is GCQDEHKNSTKAPGGHSPKTQNGLLSPPQEEKLSNS. Residues 769–789 form a helical membrane-spanning segment; it reads SLLDVFLSTTVFLILSVTCFL. Residues 790 to 800 are Extracellular-facing; sequence KHGMVASPPPP. A helical transmembrane segment spans residues 801–821; it reads AAVVVFVIAILLEVLSLVISV. The Cytoplasmic segment spans residues 822-849; it reads RMVFFLEEVMACTKRLLELISGWLPRHF. A helical membrane pass occupies residues 850–870; that stretch reads LGAILVSLPALAVFSHFTSDF. Over 871 to 873 the chain is Extracellular; the sequence is ETN. The helical transmembrane segment at 874–894 threads the bilayer; it reads IHYTMFMCCAILIAIVQYCNF. The Cytoplasmic portion of the chain corresponds to 895-902; it reads CQLSSWMR. The helical transmembrane segment at 903–923 threads the bilayer; it reads SLLATVVGAVLLILLYVSLCP. Over 924–957 the chain is Extracellular; that stretch reads DSSVETLHLDLAQNLSSRKSPCNSSMPADVKRPA. N937 and N946 each carry an N-linked (GlcNAc...) asparagine glycan. Residues 958 to 978 form a helical membrane-spanning segment; sequence DLIGQEVILAVFLLLLLVWFL. Over 979 to 1334 the chain is Cytoplasmic; the sequence is NRSFEVSYRL…LTKLNVSKSV (356 aa). Residues K1090, 1167 to 1169, 1174 to 1178, and K1214 contribute to the ATP site; these read DIW and NIASR. Residues 1266–1303 form a disordered region; it reads SVQNSDKTAHATDNSETKDALPSSKKLQKEPTKAEERC. Basic and acidic residues-rich tracts occupy residues 1272-1284 and 1292-1303; these read KTAH…ETKD and LQKEPTKAEERC.

The protein belongs to the adenylyl cyclase class-4/guanylyl cyclase family. Mg(2+) serves as cofactor. Requires Mn(2+) as cofactor. As to expression, detected in embryonic heart (at protein level).

It is found in the cell membrane. It localises to the membrane. It carries out the reaction ATP = 3',5'-cyclic AMP + diphosphate. Its activity is regulated as follows. Insensitive to calcium/calmodulin, forskolin and somatostatin. Stimulated by beta-adrenergic receptor activation. Activity is down-regulated by calcium/calcineurin. In terms of biological role, adenylyl cyclase that catalyzes the formation of the signaling molecule cAMP in response to activation of G protein-coupled receptors. The sequence is that of Adenylate cyclase type 9 (ADCY9) from Gallus gallus (Chicken).